A 275-amino-acid chain; its full sequence is Large ribosomal subunit protein uL2 (275 aa).

Residues 219–263 (EVRGAAMNPRDHPHGGGEGRAPRGMPTPKTKWGKPARGVKTRHNP) are disordered. Over residues 227 to 239 (PRDHPHGGGEGRA) the composition is skewed to basic and acidic residues. A compositionally biased stretch (basic residues) spans 249–262 (KWGKPARGVKTRHN).

Belongs to the universal ribosomal protein uL2 family. As to quaternary structure, part of the 50S ribosomal subunit. Forms a bridge to the 30S subunit in the 70S ribosome.

One of the primary rRNA binding proteins. Required for association of the 30S and 50S subunits to form the 70S ribosome, for tRNA binding and peptide bond formation. It has been suggested to have peptidyltransferase activity; this is somewhat controversial. Makes several contacts with the 16S rRNA in the 70S ribosome. In Roseiflexus castenholzii (strain DSM 13941 / HLO8), this protein is Large ribosomal subunit protein uL2.